The following is a 310-amino-acid chain: Protein YIP5 (310 aa).

The disordered stretch occupies residues 1–84 (MPSNNSSFLD…VIGQNDNDGL (84 aa)). The segment covering 10–22 (DIDDDLEGVDDFG) has biased composition (acidic residues). The segment covering 35–57 (DSPNMNNSTAGKGSEFYNTTGSK) has biased composition (polar residues). Serine 60 is subject to Phosphoserine. 5 helical membrane-spanning segments follow: residues 131–151 (TDLY…FTMS), 181–201 (LHSI…TMQV), 220–240 (LISV…ILNI), 249–269 (TVQA…SYFL), and 290–310 (SIIV…FIIF).

Belongs to the YIP1 family. Interacts with SNX3, TVP18, TVP23, YIP1 and YIP4. Interacts with SEC4; The C-terminal cysteines in the Rab GTPase SEC4 are essential for the interaction. Interacts with YPT1, YPT6, YPT7, YPT10, YPT11, YPT31, YPT32 and YPT52; These proteins are all Rab GTPases.

The protein resides in the membrane. Possible role in vesicle-mediated transport. May be involved in proper membrane localization of Rab GTPases. The polypeptide is Protein YIP5 (YIP5) (Saccharomyces cerevisiae (strain ATCC 204508 / S288c) (Baker's yeast)).